Reading from the N-terminus, the 133-residue chain is Small ribosomal subunit protein uS11 (133 aa).

It belongs to the universal ribosomal protein uS11 family. In terms of assembly, part of the 30S ribosomal subunit. Interacts with proteins S7 and S18. Binds to IF-3.

Functionally, located on the platform of the 30S subunit, it bridges several disparate RNA helices of the 16S rRNA. Forms part of the Shine-Dalgarno cleft in the 70S ribosome. This is Small ribosomal subunit protein uS11 from Bordetella avium (strain 197N).